A 938-amino-acid chain; its full sequence is Collagen alpha-1(I) chain (938 aa).

A disordered region spans residues 1-938 (GGISVPGPMG…PGPPGPPGPP (938 aa)). A 4-hydroxyproline mark is found at proline 18, proline 21, proline 24, proline 33, proline 36, proline 39, proline 54, proline 69, proline 75, proline 84, and proline 90. The span at 26-45 (PQGFQGPPGEPGEPGASGPM) shows a compositional bias: low complexity. Residues 57–71 (NGDDGEAGKPGRPGE) are compositionally biased toward basic and acidic residues. Lysine 93 carries the post-translational modification 5-hydroxylysine; alternate. Residue lysine 93 is glycosylated (O-linked (Gal...) hydroxylysine; alternate). Serine 99 is modified (phosphoserine). Residues 107–135 (DAGPAGPKGRPGASGPAGARGNDGATGAA) are compositionally biased toward low complexity. Residues proline 117, proline 138, proline 147, proline 150, proline 177, proline 180, proline 192, proline 198, proline 207, proline 213, proline 216, and proline 231 each carry the 4-hydroxyproline modification. Residues 137–149 (PPGPTGPAGPPGF) show a composition bias toward pro residues. Residues 183-222 (AGAAGPAGNPGADGQPGAKGANGAPGIAGAPGFPGARGPS) show a composition bias toward low complexity. 5-hydroxylysine is present on lysine 234. 4-hydroxyproline is present on residues proline 240, proline 243, proline 255, proline 264, proline 279, proline 285, proline 294, and proline 300. Over residues 289 to 298 (GERGGPGSRG) the composition is skewed to gly residues. A 5-hydroxylysine modification is found at lysine 309. 4-hydroxyproline occurs at positions 314, 323, 329, 335, 344, 347, 356, 365, 371, 383, 392, 401, 404, 422, 439, 445, 451, 458, 464, 476, 485, 497, 503, 509, and 518. The segment covering 338–364 (KGLTGSPGSPGPDGKTGPPGPAGQDGR) has biased composition (low complexity). The segment covering 373–392 (ARGQAGVMGFPGPKGAAGEP) has biased composition (low complexity). Residue lysine 530 is modified to 5-hydroxylysine. 4-hydroxyproline occurs at positions 536, 551, and 557. Residues 563 to 577 (SGPSGPAGPTGARGA) are compositionally biased toward low complexity. Phosphoserine is present on serine 566. 4-hydroxyproline occurs at positions 578, 584, 587, 596, 602, 620, 629, and 638. The span at 590–617 (AGFAGPPGADGQPGAKGEPGDAGAKGDA) shows a compositional bias: low complexity. The segment covering 619–631 (PPGPAGPTGPPGP) has biased composition (pro residues). Lysine 641 bears the 5-hydroxylysine mark. Residues 646–662 (SAGPPGATGFPGAAGRV) show a composition bias toward low complexity. 4-hydroxyproline is present on residues proline 650 and proline 656. Proline 664 carries the post-translational modification 3-hydroxyproline. 4-hydroxyproline occurs at positions 665, 674, 677, 693, 703, 712, 730, 739, 742, 748, 763, 769, 775, 784, and 790. Residues 762–772 (PPGPMGPPGLA) are compositionally biased toward pro residues. 5-hydroxylysine is present on lysine 799. Residues 807-822 (PGPPGAPGAPGAPGPV) are compositionally biased toward pro residues. 4-hydroxyproline is present on residues proline 810, proline 813, and proline 816. Over residues 843-867 (AGPAGARGPAGPQGPRRGFSGLQGP) the composition is skewed to low complexity. A 4-hydroxyproline mark is found at proline 871, proline 874, proline 892, and proline 907. Over residues 874–907 (PGEQGPSGASGPAGPRGPPGSAGSPGKDGLNGLP) the composition is skewed to low complexity. A 3-hydroxyproline modification is found at proline 912. The residue at position 913 (proline 913) is a 4-hydroxyproline. A compositionally biased stretch (pro residues) spans 923–938 (VGPPGPPGPPGPPGPP). At proline 925 the chain carries 3-hydroxyproline. At proline 926 the chain carries 4-hydroxyproline. Proline 928 carries the 3-hydroxyproline modification. Proline 929 carries the 4-hydroxyproline modification. A 3-hydroxyproline modification is found at proline 931. Proline 932, proline 935, and proline 938 each carry 4-hydroxyproline.

Belongs to the fibrillar collagen family. As to quaternary structure, trimers of one alpha 2(I) and two alpha 1(I) chains. In terms of processing, contains mostly 4-hydroxyproline. Proline residues at the third position of the tripeptide repeating unit (G-X-Y) are hydroxylated in some or all of the chains. Contains 3-hydroxyproline at a few sites. This modification occurs on the first proline residue in the sequence motif Gly-Pro-Hyp, where Hyp is 4-hydroxyproline. Post-translationally, lysine residues at the third position of the tripeptide repeating unit (G-X-Y) are 5-hydroxylated in some or all of the chains. In terms of processing, O-glycosylated on hydroxylated lysine residues. The O-linked glycan consists of a Glc-Gal disaccharide. As to expression, expressed in bones.

It is found in the secreted. Its subcellular location is the extracellular space. The protein resides in the extracellular matrix. Type I collagen is a member of group I collagen (fibrillar forming collagen). The polypeptide is Collagen alpha-1(I) chain (Megalonyx jeffersonii (Jefferson's ground sloth)).